Here is a 511-residue protein sequence, read N- to C-terminus: Ribonuclease Y (511 aa).

Residues 3–23 (VTIVASIACFIVGGILSYVLF) traverse the membrane as a helical segment. The KH domain maps to 201-261 (SVTVFHIESD…VRREIARLAL (61 aa)). Residues 327–420 (LLQHARETAN…VQVCDAISGA (94 aa)) enclose the HD domain.

This sequence belongs to the RNase Y family.

It is found in the cell membrane. Its function is as follows. Endoribonuclease that initiates mRNA decay. The protein is Ribonuclease Y of Bacteroides fragilis (strain ATCC 25285 / DSM 2151 / CCUG 4856 / JCM 11019 / LMG 10263 / NCTC 9343 / Onslow / VPI 2553 / EN-2).